Here is a 153-residue protein sequence, read N- to C-terminus: UPF0251 protein Daud_0090 (153 aa).

Over residues 129–138 the composition is skewed to basic and acidic residues; sequence ELMTRPERCS. The segment at 129–153 is disordered; sequence ELMTRPERCSRPKRGAGKYRVPKKR. Over residues 139 to 153 the composition is skewed to basic residues; the sequence is RPKRGAGKYRVPKKR.

It belongs to the UPF0251 family.

The protein is UPF0251 protein Daud_0090 of Desulforudis audaxviator (strain MP104C).